We begin with the raw amino-acid sequence, 464 residues long: Synaptosomal-associated protein 47 (464 aa).

Positions 20–42 (GRLWDSSGVPQRQKRPGPWRTQT) are disordered. 2 consecutive t-SNARE coiled-coil homology domains span residues 154–216 (VADA…LTEL) and 401–463 (TSLP…MKRL).

The protein belongs to the SVAP1 family. As to quaternary structure, forms a complex containing SNAP47, VAMP2 and STX1A. Associates with the BLOC-1 complex. Interacts with BLOC1S6.

Its subcellular location is the endomembrane system. It localises to the cytoplasm. The protein localises to the perinuclear region. Functionally, plays a role in intracellular membrane fusion. The polypeptide is Synaptosomal-associated protein 47 (SNAP47) (Homo sapiens (Human)).